The chain runs to 451 residues: Coproporphyrinogen III oxidase (451 aa).

Residues 10-15, 36-37, 58-61, valine 242, tryptophan 393, and 429-431 each bind FAD; these read GGGISG, DP, GAEA, and IGV.

The protein belongs to the protoporphyrinogen/coproporphyrinogen oxidase family. Coproporphyrinogen III oxidase subfamily. The cofactor is FAD.

The protein localises to the cytoplasm. The enzyme catalyses coproporphyrinogen III + 3 O2 = coproporphyrin III + 3 H2O2. It participates in porphyrin-containing compound metabolism; protoheme biosynthesis. In terms of biological role, involved in coproporphyrin-dependent heme b biosynthesis. Catalyzes the oxidation of coproporphyrinogen III to coproporphyrin III. The polypeptide is Coproporphyrinogen III oxidase (Mycobacterium leprae (strain TN)).